Reading from the N-terminus, the 311-residue chain is Cytosolic Fe-S cluster assembly factor Nubp1 homolog (311 aa).

Residues Cys9, Cys23, Cys26, and Cys32 each contribute to the [4Fe-4S] cluster site. Residue Gly63 to Ser70 coordinates ATP. [4Fe-4S] cluster contacts are provided by Cys240 and Cys243.

This sequence belongs to the Mrp/NBP35 ATP-binding proteins family. NUBP1/NBP35 subfamily. Heterotetramer of 2 Nubp1 and 2 Nubp2 chains. [4Fe-4S] cluster is required as a cofactor.

It is found in the cytoplasm. Its function is as follows. Component of the cytosolic iron-sulfur (Fe/S) protein assembly (CIA) machinery. Required for maturation of extramitochondrial Fe-S proteins. The Nubp1-Nubp2 heterotetramer forms a Fe-S scaffold complex, mediating the de novo assembly of an Fe-S cluster and its transfer to target apoproteins. This Drosophila yakuba (Fruit fly) protein is Cytosolic Fe-S cluster assembly factor Nubp1 homolog.